Consider the following 75-residue polypeptide: uncharacterized protein (75 aa).

Positions 1-21 are cleaved as a signal peptide; sequence MRLIVVSIMVTLLSGCGSIIS.

This sequence to E.coli YidQ.

This is an uncharacterized protein from Escherichia coli O157:H7.